We begin with the raw amino-acid sequence, 388 residues long: L-lactate dehydrogenase (388 aa).

The region spanning 1–380 (MIISSSSDYR…SRDSLVREIE (380 aa)) is the FMN hydroxy acid dehydrogenase domain. Substrate is bound at residue Y24. FMN is bound by residues S106 and Q127. Substrate is bound at residue Y129. T155 serves as a coordination point for FMN. R164 contributes to the substrate binding site. An FMN-binding site is contributed by K251. H275 functions as the Proton acceptor in the catalytic mechanism. Residue R278 coordinates substrate. 306-330 (DSGIRSGLDVVRMLAQGADGVLLGR) is a binding site for FMN.

The protein belongs to the FMN-dependent alpha-hydroxy acid dehydrogenase family. FMN is required as a cofactor.

The protein localises to the cell inner membrane. It catalyses the reaction (S)-lactate + A = pyruvate + AH2. Its function is as follows. Catalyzes the conversion of L-lactate to pyruvate. Is coupled to the respiratory chain. This is L-lactate dehydrogenase from Xanthobacter autotrophicus (strain ATCC BAA-1158 / Py2).